The chain runs to 180 residues: Fetal and adult testis-expressed transcript protein homolog (180 aa).

The disordered stretch occupies residues 77–108; that stretch reads GPQLRGVGVVGEQGDGGAQPQENPGGSQGMRS. The span at 84-93 shows a compositional bias: gly residues; the sequence is GVVGEQGDGG. The segment covering 96 to 107 has biased composition (polar residues); the sequence is PQENPGGSQGMR. A helical membrane pass occupies residues 160 to 178; the sequence is VLLFTMLLSSCITNLWLWM.

Interacts with BIK and RNF183. Interacts with IMMT/MIC60and EMD.

It is found in the mitochondrion. The protein resides in the mitochondrion outer membrane. It localises to the endoplasmic reticulum membrane. Involved in the regulation of endoplasmic reticulum (ER)-mitochondria coupling. Negatively regulates the ER-mitochondria distance and Ca(2+) transfer from ER to mitochondria possibly implicating it in the regulation of apoptosis. May collaborate with RNF183 to restrain BIK protein levels thus regulating apoptotic signaling. The sequence is that of Fetal and adult testis-expressed transcript protein homolog (FATE1) from Bos taurus (Bovine).